A 196-amino-acid chain; its full sequence is Holliday junction branch migration complex subunit RuvA (196 aa).

Positions 1-63 (MYDYIKGTLV…DDAHLLFGFH (63 aa)) are domain I. Residues 64-142 (TEDEKEVFLK…ELPAETTNTT (79 aa)) are domain II. The interval 143–146 (ANQT) is flexible linker. Residues 147 to 196 (AGNQQLDEAMEALLALGYKSTELKKVKAFFEDTNETAEQYIKSALKMLMK) are domain III.

The protein belongs to the RuvA family. As to quaternary structure, homotetramer. Forms an RuvA(8)-RuvB(12)-Holliday junction (HJ) complex. HJ DNA is sandwiched between 2 RuvA tetramers; dsDNA enters through RuvA and exits via RuvB. An RuvB hexamer assembles on each DNA strand where it exits the tetramer. Each RuvB hexamer is contacted by two RuvA subunits (via domain III) on 2 adjacent RuvB subunits; this complex drives branch migration. In the full resolvosome a probable DNA-RuvA(4)-RuvB(12)-RuvC(2) complex forms which resolves the HJ.

The protein resides in the cytoplasm. Its function is as follows. The RuvA-RuvB-RuvC complex processes Holliday junction (HJ) DNA during genetic recombination and DNA repair, while the RuvA-RuvB complex plays an important role in the rescue of blocked DNA replication forks via replication fork reversal (RFR). RuvA specifically binds to HJ cruciform DNA, conferring on it an open structure. The RuvB hexamer acts as an ATP-dependent pump, pulling dsDNA into and through the RuvAB complex. HJ branch migration allows RuvC to scan DNA until it finds its consensus sequence, where it cleaves and resolves the cruciform DNA. This Streptococcus thermophilus (strain CNRZ 1066) protein is Holliday junction branch migration complex subunit RuvA.